Consider the following 243-residue polypeptide: MAMGEALRAAAADAVVTFLWVLCVSTLGASTTAVTSYLRLQGVHFALLVTVSLLSVLLFVFNILCDALGGASFNPTGVAAFYAAGVTSPSLFSIALRLPAQAAGAVGGALAISELMPAQYRHMLGGPSLKVDPHTGAGAELVLTFVITLAVLLIIVKGPRNPIIKTWMISICTLCLVLSGAAYTGPSMNPANAFGWAYVNNRHNTWEQFYVYWICPFIGAILAAWIFRAMFLTPPPKPKAKKA.

2 consecutive transmembrane segments (helical) span residues 9 to 29 (AAAA…TLGA) and 45 to 65 (FALL…NILC). Positions 74-76 (NPT) match the NPA 1 motif. Transmembrane regions (helical) follow at residues 98–118 (LPAQ…LMPA), 136–156 (GAGA…LIIV), and 163–183 (IIKT…GAAY). The NPA 2 signature appears at 189-191 (NPA). Residues 211-231 (VYWICPFIGAILAAWIFRAMF) traverse the membrane as a helical segment.

It belongs to the MIP/aquaporin (TC 1.A.8) family. SIP (TC 1.A.8.10) subfamily.

It localises to the membrane. Aquaporins facilitate the transport of water and small neutral solutes across cell membranes. This Zea mays (Maize) protein is Aquaporin SIP1-2 (SIP1-2).